The following is a 143-amino-acid chain: Sorting nexin-3 (143 aa).

Residues 23 to 140 (NILEIDVINP…SSFLQSPEFK (118 aa)) enclose the PX domain. The a 1,2-diacyl-sn-glycero-3-phospho-(1D-myo-inositol-3-phosphate) site is built by Arg-66, Ser-68, Lys-92, Arg-97, and Arg-106.

It belongs to the sorting nexin family.

The protein localises to the cytoplasm. Its subcellular location is the golgi apparatus membrane. It is found in the prevacuolar compartment membrane. Required for retention of late Golgi membrane proteins. Component of the retrieval machinery that functions by direct interaction with the cytosolic tails of certain TGN membrane proteins during the sorting/budding process at the prevacuolar compartment. Binds phosphatidylinositol 3-phosphate (PtdIns(P3)). The polypeptide is Sorting nexin-3 (snx3) (Schizosaccharomyces pombe (strain 972 / ATCC 24843) (Fission yeast)).